Reading from the N-terminus, the 365-residue chain is MLPIGIFYQFYAYFALVLSIPILYMQLRARNIPCLLLLFWLTLTTLIYVVESAIWSNPYAETIRWMGYGLCDITSRIVTCSSIGIPASAFTLVLYLDTVIRRDHPLKRYENWIWHVCLSILLPLIIMAMMVPLESNRYVVICMNGCYSSFYQTWYTLLFFYIPPCLLSFGGLFFVSRIVVLYWRRQRELQQFFQRDSQLTSKRFLRLLCLAAVFFLGYFPLTIFMVVANGKLQQFLPFNHELVEAWHQESITYYPTTKVGLNDWVPPTVLYLMSLFFSTSGGWTEKVALILWSLLVWLPFTKNTALGRHAQFKLDCCKSIESTMAGKTLDSTDFKEKCLVLERQWSKSSIPSDNSSELQDAAKYV.

The next 7 helical transmembrane spans lie at 7–24 (FYQFYAYFALVLSIPILY), 31–54 (NIPCLLLLFWLTLTTLIYVVESAI), 73–100 (ITSRIVTCSSIGIPASAFTLVLYLDTVI), 116–133 (VCLSILLPLIIMAMMVPL), 155–182 (YTLLFFYIPPCLLSFGGLFFVSRIVVLY), 204–226 (FLRLLCLAAVFFLGYFPLTIFMV), and 265–283 (VPPTVLYLMSLFFSTSGGW).

Belongs to the G-protein coupled receptor 4 family.

Its subcellular location is the membrane. Its function is as follows. Receptor for the peptide pheromone M-factor, a mating factor of S.pombe. Pheromone signaling is essential for initiation of meiosis in S.pombe; M-factor signaling alone may be sufficient. The protein is Pheromone M-factor receptor (map3) of Schizosaccharomyces pombe (strain 972 / ATCC 24843) (Fission yeast).